Here is a 525-residue protein sequence, read N- to C-terminus: Arylsulfatase G (525 aa).

A signal peptide spans 1–16; it reads MGWLFLKVLLVGMAFS. The Ca(2+) site is built by aspartate 44, aspartate 45, and cysteine 84. The Nucleophile role is filled by cysteine 84. Cysteine 84 carries the 3-oxoalanine (Cys) modification. N-linked (GlcNAc...) asparagine glycosylation occurs at asparagine 117. Lysine 137 provides a ligand contact to substrate. Histidine 139 is an active-site residue. Serine 162 is a substrate binding site. Asparagine 215 carries N-linked (GlcNAc...) asparagine glycosylation. Histidine 251 provides a ligand contact to substrate. 2 residues coordinate Ca(2+): aspartate 302 and asparagine 303. N-linked (GlcNAc...) asparagine glycosylation is found at asparagine 356 and asparagine 497.

Belongs to the sulfatase family. Requires Ca(2+) as cofactor. Post-translationally, N-glycosylated with both high mannose and complex type sugars. The conversion to 3-oxoalanine (also known as C-formylglycine, FGly), of a serine or cysteine residue in prokaryotes and of a cysteine residue in eukaryotes, is critical for catalytic activity. In terms of processing, the 63-kDa precursor undergoes proteolytic processing in two steps, yielding two fragments in the first step (apparent molecular masses of 44 and 18 kDa). In the second step, the 44-kDa fragment is processed further to the 34- and 10-kDa chains. The 10-kDa chain is a cleavage product of the 44-kDa fragment but linked to the 18-kDa chain through a disulfide bridge. Highly expressed in the spleen, kidney, liver, brain, and testis (at protein level).

The protein resides in the lysosome. It carries out the reaction an aryl sulfate + H2O = a phenol + sulfate + H(+). The catalysed reaction is Hydrolysis of the 3-sulfate groups of the N-sulfo-D-glucosamine 3-O-sulfate units of heparin.. Its function is as follows. Displays arylsulfatase activity at acidic pH towards the artificial substrate p-nitrocatechol sulfate. Catalyzes the hydrolysis of the 3-sulfate groups of the N-sulfo-D-glucosamine 3-O-sulfate units of heparin. This Mus musculus (Mouse) protein is Arylsulfatase G (Arsg).